The following is a 477-amino-acid chain: Probable periplasmic serine endoprotease DegP-like (477 aa).

The signal sequence occupies residues 1 to 27; sequence MSIPRLKSYLMMFAAVLMLGQVLTAQA. Catalysis depends on charge relay system residues histidine 117, aspartate 147, and serine 220. Substrate is bound by residues 218–220 and 275–279; these read GNS and LGVVI. PDZ domains follow at residues 264-355 and 361-466; these read LKKD…IRNG and DISV…LRQG.

Belongs to the peptidase S1C family.

Its subcellular location is the periplasm. It catalyses the reaction Acts on substrates that are at least partially unfolded. The cleavage site P1 residue is normally between a pair of hydrophobic residues, such as Val-|-Val.. Might be efficient in the degradation of transiently denatured and unfolded proteins which accumulate in the periplasm following stress conditions. The polypeptide is Probable periplasmic serine endoprotease DegP-like (Pseudomonas putida (strain ATCC 700007 / DSM 6899 / JCM 31910 / BCRC 17059 / LMG 24140 / F1)).